The sequence spans 381 residues: Chaperone protein DnaJ (381 aa).

The 66-residue stretch at 5–70 folds into the J domain; that stretch reads DYYEVLGIER…EKRSAYDQFG (66 aa). The CR-type zinc-finger motif lies at 137 to 215; it reads GTTVDIRVPR…CHGEGRVRET (79 aa). Residues Cys150, Cys153, Cys167, Cys170, Cys189, Cys192, Cys203, and Cys206 each contribute to the Zn(2+) site. 4 CXXCXGXG motif repeats span residues 150 to 157, 167 to 174, 189 to 196, and 203 to 210; these read CEHCDGDG, CPTCHGQG, CPTCHGAG, and CRKCHGEG.

This sequence belongs to the DnaJ family. Homodimer. The cofactor is Zn(2+).

The protein resides in the cytoplasm. Its function is as follows. Participates actively in the response to hyperosmotic and heat shock by preventing the aggregation of stress-denatured proteins and by disaggregating proteins, also in an autonomous, DnaK-independent fashion. Unfolded proteins bind initially to DnaJ; upon interaction with the DnaJ-bound protein, DnaK hydrolyzes its bound ATP, resulting in the formation of a stable complex. GrpE releases ADP from DnaK; ATP binding to DnaK triggers the release of the substrate protein, thus completing the reaction cycle. Several rounds of ATP-dependent interactions between DnaJ, DnaK and GrpE are required for fully efficient folding. Also involved, together with DnaK and GrpE, in the DNA replication of plasmids through activation of initiation proteins. The polypeptide is Chaperone protein DnaJ (Chromohalobacter salexigens (strain ATCC BAA-138 / DSM 3043 / CIP 106854 / NCIMB 13768 / 1H11)).